Reading from the N-terminus, the 73-residue chain is Translation initiation factor IF-1 (73 aa).

The 73-residue stretch at 1–73 (MANKEELIEF…SKGRITYRAR (73 aa)) folds into the S1-like domain.

Belongs to the IF-1 family. As to quaternary structure, component of the 30S ribosomal translation pre-initiation complex which assembles on the 30S ribosome in the order IF-2 and IF-3, IF-1 and N-formylmethionyl-tRNA(fMet); mRNA recruitment can occur at any time during PIC assembly.

The protein localises to the cytoplasm. One of the essential components for the initiation of protein synthesis. Stabilizes the binding of IF-2 and IF-3 on the 30S subunit to which N-formylmethionyl-tRNA(fMet) subsequently binds. Helps modulate mRNA selection, yielding the 30S pre-initiation complex (PIC). Upon addition of the 50S ribosomal subunit IF-1, IF-2 and IF-3 are released leaving the mature 70S translation initiation complex. This chain is Translation initiation factor IF-1, found in Acinetobacter baylyi (strain ATCC 33305 / BD413 / ADP1).